The chain runs to 227 residues: Phosphoglycolate phosphatase (227 aa).

Asp8 serves as the catalytic Nucleophile. Asp8 and Asp10 together coordinate Mg(2+). Lys152 contributes to the substrate binding site. Mg(2+) contacts are provided by Asp175 and Asp179.

This sequence belongs to the archaeal SPP-like hydrolase family. The cofactor is Mg(2+).

The catalysed reaction is 2-phosphoglycolate + H2O = glycolate + phosphate. In terms of biological role, catalyzes the dephosphorylation of 2-phosphoglycolate. The chain is Phosphoglycolate phosphatase from Halorubrum lacusprofundi (strain ATCC 49239 / DSM 5036 / JCM 8891 / ACAM 34).